The chain runs to 663 residues: Epithelial sodium channel subunit gamma-2 (663 aa).

Topologically, residues Met-1–Trp-55 are cytoplasmic. The chain crosses the membrane as a helical span at residues Ile-56–Leu-76. Topologically, residues Met-77–Cys-544 are extracellular. Cystine bridges form between Cys-101-Cys-286, Cys-209-Cys-217, Cys-263-Cys-270, Cys-375-Cys-460, Cys-397-Cys-456, Cys-401-Cys-452, Cys-410-Cys-437, and Cys-412-Cys-426. A helical membrane pass occupies residues Ser-545–Leu-565. The Cytoplasmic segment spans residues Arg-566–Phe-663.

Belongs to the amiloride-sensitive sodium channel (TC 1.A.6) family. SCNN1G subfamily. As to quaternary structure, component of the heterotrimeric epithelial sodium channel (ENaC) composed of an alpha/SCNN1A, a beta/SCNN1B and a gamma/SCNN1G subunit.

It is found in the apical cell membrane. The enzyme catalyses Na(+)(in) = Na(+)(out). With respect to regulation, originally identified and characterized by its inhibition by the diuretic drug amiloride. In terms of biological role, this is one of the three pore-forming subunits of the heterotrimeric epithelial sodium channel (ENaC), a critical regulator of sodium balance and fluid homeostasis. ENaC operates in epithelial tissues, where it mediates the electrodiffusion of sodium ions from extracellular fluid through the apical membrane of cells, with water following osmotically. The polypeptide is Epithelial sodium channel subunit gamma-2 (scnn1g-b) (Xenopus laevis (African clawed frog)).